Reading from the N-terminus, the 474-residue chain is Glycogen synthase (474 aa).

Lys-12 contacts ADP-alpha-D-glucose.

This sequence belongs to the glycosyltransferase 1 family. Bacterial/plant glycogen synthase subfamily.

The catalysed reaction is [(1-&gt;4)-alpha-D-glucosyl](n) + ADP-alpha-D-glucose = [(1-&gt;4)-alpha-D-glucosyl](n+1) + ADP + H(+). Its pathway is glycan biosynthesis; glycogen biosynthesis. Synthesizes alpha-1,4-glucan chains using ADP-glucose. This chain is Glycogen synthase, found in Xanthomonas campestris pv. campestris (strain 8004).